The primary structure comprises 236 residues: uncharacterized protein (236 aa).

It belongs to the RHS family.

This is an uncharacterized protein from Escherichia coli (strain K12).